The chain runs to 434 residues: 3-phosphoshikimate 1-carboxyvinyltransferase (434 aa).

Positions 15, 16, and 20 each coordinate 3-phosphoshikimate. Residue Lys15 coordinates phosphoenolpyruvate. 2 residues coordinate phosphoenolpyruvate: Gly96 and Arg124. 3-phosphoshikimate is bound by residues Ser169, Gln171, Ser195, Asp319, and Lys346. Gln171 contributes to the phosphoenolpyruvate binding site. The active-site Proton acceptor is the Asp319. Positions 350 and 394 each coordinate phosphoenolpyruvate.

It belongs to the EPSP synthase family. As to quaternary structure, monomer.

The protein localises to the cytoplasm. The catalysed reaction is 3-phosphoshikimate + phosphoenolpyruvate = 5-O-(1-carboxyvinyl)-3-phosphoshikimate + phosphate. The protein operates within metabolic intermediate biosynthesis; chorismate biosynthesis; chorismate from D-erythrose 4-phosphate and phosphoenolpyruvate: step 6/7. Its function is as follows. Catalyzes the transfer of the enolpyruvyl moiety of phosphoenolpyruvate (PEP) to the 5-hydroxyl of shikimate-3-phosphate (S3P) to produce enolpyruvyl shikimate-3-phosphate and inorganic phosphate. This chain is 3-phosphoshikimate 1-carboxyvinyltransferase, found in Chlorobaculum parvum (strain DSM 263 / NCIMB 8327) (Chlorobium vibrioforme subsp. thiosulfatophilum).